Reading from the N-terminus, the 400-residue chain is MAIKLEIKNLYKIFGEHPQRAFKYIEQGLSKEQILEKTGLSLGVKDASLAIEEGEIFVIMGLSGSGKSTMVRLLNRLIEPTRGQVLIDGVDIAKISDAELREVRRKKIAMVFQSFALMPHMTVLDNTAFGMELAGINAEERREKALDALRQVGLENYAHSYPDELSGGMRQRVGLARALAINPDILLMDEAFSALDPLIRTEMQDELVKLQAKHQRTIVFISHDLDEAMRIGDRIAIMQNGEVVQVGTPDEILNNPANDYVRTFFRGVDISQVFSAKDIARRTPNGLIRKTPGFGPRSALKLLQDEDREYGYVIERGNKFVGAVSIDSLKTALTQQQGLDAALIDAPLAVDAQTPLSELLSHVGQAPCAVPVVDEDQQYVGIISKGMLLRALDREGVNNG.

The ABC transporter domain occupies 29-265 (LSKEQILEKT…PANDYVRTFF (237 aa)). Residue 61-68 (GLSGSGKS) participates in ATP binding. 2 CBS domains span residues 282 to 341 (RTPN…GLDA) and 343 to 400 (LIDA…VNNG).

It belongs to the ABC transporter superfamily. As to quaternary structure, the complex is composed of two ATP-binding proteins (ProV), two transmembrane proteins (ProW) and a solute-binding protein (ProX).

Its subcellular location is the cell inner membrane. Its function is as follows. Part of the ProU ABC transporter complex involved in glycine betaine and proline betaine uptake. Probably responsible for energy coupling to the transport system. This is Glycine betaine/proline betaine transport system ATP-binding protein ProV from Escherichia coli (strain K12).